The chain runs to 299 residues: NAD kinase (299 aa).

The Proton acceptor role is filled by aspartate 71. NAD(+) contacts are provided by residues 71–72 (DG), 145–146 (ND), arginine 173, aspartate 175, 186–191 (TAYSLS), alanine 210, and glutamine 248.

Belongs to the NAD kinase family. The cofactor is a divalent metal cation.

Its subcellular location is the cytoplasm. The enzyme catalyses NAD(+) + ATP = ADP + NADP(+) + H(+). In terms of biological role, involved in the regulation of the intracellular balance of NAD and NADP, and is a key enzyme in the biosynthesis of NADP. Catalyzes specifically the phosphorylation on 2'-hydroxyl of the adenosine moiety of NAD to yield NADP. The sequence is that of NAD kinase from Bordetella pertussis (strain Tohama I / ATCC BAA-589 / NCTC 13251).